The following is a 500-amino-acid chain: MLSTSPSRSFKNKFRAAFWPVHNYELGKFIPISALMFCILFNQNILRILKDSILISEISAEIAGFAKVYCVTPVAALFVIIYAKMINHLTFEKIFYYLSAFFISCFILFAFVIYPNIHIFHVHPDTLSDWMNKYPHFKWYISLVGNWGYIVYYSLAELWPNIFYVLLFWQFTNELTTTEEAKRFYTLFSLFGNSSLILVGFLMMNLSSEDTIIKKFISISDSKITLVQVSTTIIAIVAIICCLLVRFISKYIFTNPLFYHKTKSSRSTAQRMGLIKSFKYIVKSKYLWLLLICSAAFGFAINLVEAVWKAKIKELYPTVNTYAEFNSLYILWTGVAIIVMTIIGNNVMRMHNWFVAAVISPVIIMVTGVLFFGLIVFDQQILSLFDGAILMSPLALAVSIGGIQNILAKGTKYSIWDTSREMLYIPLDDELKTKGKAAVDVISAKVGKSSSGLVQSIIFTLVPNATFTSISPILMVVFTFVCFAWIYAVRKIYFEYQKIA.

11 helical membrane-spanning segments follow: residues 26–46 (LGKF…QNIL), 62–82 (IAGF…VIIY), 94–114 (IFYY…FVIY), 149–169 (YIVY…LLFW), 184–204 (FYTL…FLMM), 224–244 (ITLV…CCLL), 287–307 (LWLL…VEAV), 328–348 (LYIL…NNVM), 357–377 (AVIS…LIVF), 381–401 (ILSL…VSIG), and 469–489 (SISP…IYAV).

Belongs to the ADP/ATP translocase tlc family.

It is found in the cell membrane. Functionally, provides the rickettsial cell with host ATP in exchange for rickettsial ADP. This is an obligate exchange system. This energy acquiring activity is an important component of rickettsial parasitism. In Rickettsia prowazekii (strain Madrid E), this protein is ADP,ATP carrier protein 5 (tlcE).